We begin with the raw amino-acid sequence, 379 residues long: tRNA(Met) cytidine acetate ligase (379 aa).

ATP is bound by residues 8-21, G97, N153, and R176; that span reads IAEF…HEYL.

This sequence belongs to the TmcAL family.

It localises to the cytoplasm. It carries out the reaction cytidine(34) in elongator tRNA(Met) + acetate + ATP = N(4)-acetylcytidine(34) in elongator tRNA(Met) + AMP + diphosphate. Catalyzes the formation of N(4)-acetylcytidine (ac(4)C) at the wobble position of elongator tRNA(Met), using acetate and ATP as substrates. First activates an acetate ion to form acetyladenylate (Ac-AMP) and then transfers the acetyl group to tRNA to form ac(4)C34. This is tRNA(Met) cytidine acetate ligase from Lactococcus lactis subsp. cremoris (strain MG1363).